Consider the following 239-residue polypeptide: Probable transcriptional regulatory protein lmo0369 (239 aa).

The protein belongs to the TACO1 family. YeeN subfamily.

It is found in the cytoplasm. This is Probable transcriptional regulatory protein lmo0369 from Listeria monocytogenes serovar 1/2a (strain ATCC BAA-679 / EGD-e).